A 337-amino-acid chain; its full sequence is Anthranilate phosphoribosyltransferase (337 aa).

Residues glycine 81, 84 to 85 (GD), threonine 89, 91 to 94 (NIST), 109 to 117 (KHGNRALSS), and threonine 121 contribute to the 5-phospho-alpha-D-ribose 1-diphosphate site. Glycine 81 is an anthranilate binding site. Residue serine 93 coordinates Mg(2+). Asparagine 112 contributes to the anthranilate binding site. Arginine 167 lines the anthranilate pocket. 2 residues coordinate Mg(2+): aspartate 225 and glutamate 226.

Belongs to the anthranilate phosphoribosyltransferase family. As to quaternary structure, homodimer. It depends on Mg(2+) as a cofactor.

The enzyme catalyses N-(5-phospho-beta-D-ribosyl)anthranilate + diphosphate = 5-phospho-alpha-D-ribose 1-diphosphate + anthranilate. Its pathway is amino-acid biosynthesis; L-tryptophan biosynthesis; L-tryptophan from chorismate: step 2/5. Catalyzes the transfer of the phosphoribosyl group of 5-phosphorylribose-1-pyrophosphate (PRPP) to anthranilate to yield N-(5'-phosphoribosyl)-anthranilate (PRA). The polypeptide is Anthranilate phosphoribosyltransferase (Sinorhizobium medicae (strain WSM419) (Ensifer medicae)).